A 360-amino-acid polypeptide reads, in one-letter code: 3-dehydroquinate synthase (360 aa).

Residues aspartate 72–lysine 77, glycine 106–aspartate 110, threonine 130–threonine 131, lysine 143, lysine 152, and threonine 170–threonine 173 contribute to the NAD(+) site. 3 residues coordinate Zn(2+): glutamate 185, histidine 248, and histidine 265.

Belongs to the sugar phosphate cyclases superfamily. Dehydroquinate synthase family. Co(2+) is required as a cofactor. Requires Zn(2+) as cofactor. The cofactor is NAD(+).

It is found in the cytoplasm. The catalysed reaction is 7-phospho-2-dehydro-3-deoxy-D-arabino-heptonate = 3-dehydroquinate + phosphate. It participates in metabolic intermediate biosynthesis; chorismate biosynthesis; chorismate from D-erythrose 4-phosphate and phosphoenolpyruvate: step 2/7. Functionally, catalyzes the conversion of 3-deoxy-D-arabino-heptulosonate 7-phosphate (DAHP) to dehydroquinate (DHQ). The chain is 3-dehydroquinate synthase from Geobacter metallireducens (strain ATCC 53774 / DSM 7210 / GS-15).